Consider the following 404-residue polypeptide: Calcium/calmodulin-dependent protein kinase cmkB (404 aa).

The Protein kinase domain occupies 18-279 (YKTGKTLGAG…AHQALQHPWI (262 aa)). ATP contacts are provided by residues 24 to 32 (LGAGLYSVV) and lysine 47. Aspartate 141 (proton acceptor) is an active-site residue. Threonine 179 carries the post-translational modification Phosphothreonine; by cmkC. The interval 279–322 (INPPYDTTDDLGSGEDLLPNIKKNFNARRTLHKAIDTVRAINKL) is autoinhibitory domain. The segment at 301–323 (KNFNARRTLHKAIDTVRAINKLR) is calmodulin-binding. A disordered region spans residues 336–404 (VDPKPEHVNG…WSRTAPRSER (69 aa)). 2 stretches are compositionally biased toward basic and acidic residues: residues 338-370 (PKPEHVNGSEVVEDRTTPRERENEDAMEIDSRS) and 379-389 (QIREQERKVKE).

The protein belongs to the protein kinase superfamily. CAMK Ser/Thr protein kinase family. CaMK subfamily. Post-translationally, phosphorylated by cmkC on Thr-179.

The enzyme catalyses L-seryl-[protein] + ATP = O-phospho-L-seryl-[protein] + ADP + H(+). The catalysed reaction is L-threonyl-[protein] + ATP = O-phospho-L-threonyl-[protein] + ADP + H(+). Activated by Ca(2+)/calmodulin. Binding of calmodulin results in conformational change that relieves intrasteric autoinhibition and allows phosphorylation of Thr-179 within the activation loop by cmkC. Calcium/calmodulin-dependent protein kinase that operates in the calcium-triggered CaMKK-CaMK1 signaling cascade. Required in G1-phase of the cell cycle for proper timing of the initial nuclear division after germination, but not for subsequent mitoses. Required for the normal temporal regulation of nimX activity. The polypeptide is Calcium/calmodulin-dependent protein kinase cmkB (Emericella nidulans (Aspergillus nidulans)).